We begin with the raw amino-acid sequence, 599 residues long: UV-damage endonuclease (599 aa).

Disordered stretches follow at residues 89–224 and 561–599; these read TELA…EKES and IMGP…EDEK. Residues 97–115 show a composition bias toward basic residues; the sequence is PHKKSTSTSTRKRARSSKK. Residues 116-127 show a composition bias toward basic and acidic residues; it reads KATDSVSDKIDE. The span at 137–146 shows a compositional bias: basic residues; that stretch reads HLRRSSRSKK.

It belongs to the uve1/UvsE family.

Endonuclease for the repair of UV-irradiated DNA. Involved in the excision of cyclobutane pyrimidine dimers (CPD) and 6-4 pyrimidine pyrimidones (6-4PP) which forms the UV damage repair (UVDR) pathway. Also functions in oxidative damage repair in vivo. Provides back-up AP endonuclease activity to apn2 together with apn1. This is UV-damage endonuclease (uve1) from Schizosaccharomyces pombe (strain 972 / ATCC 24843) (Fission yeast).